The sequence spans 852 residues: Taste receptor type 1 member 3 (852 aa).

A signal peptide spans 1–20 (MLGPAVLGLSLWALLQPGAG). The Extracellular portion of the chain corresponds to 21 to 570 (APLCLSQQLR…FLAWGEPAVL (550 aa)). Residues Asn-85, Asn-130, Asn-264, Asn-285, Asn-380, Asn-411, Asn-432, and Asn-475 are each glycosylated (N-linked (GlcNAc...) asparagine). A helical transmembrane segment spans residues 571 to 591 (LLLLLLSLALGLVLAALGLFV). At 592–603 (HHRDSPLVQASG) the chain is on the cytoplasmic side. Residues 604–624 (GPLACFGLVCLGLVCLSVLLF) traverse the membrane as a helical segment. Topologically, residues 625 to 639 (PGQPSPAQCLAQQPL) are extracellular. The chain crosses the membrane as a helical span at residues 640 to 660 (SHLPLTGCLSTLFLQAAEIFV). Residues 661–682 (ESELPLSWADRLSGCLRGPWAW) are Cytoplasmic-facing. A helical membrane pass occupies residues 683–703 (LVVLLAMLVEVALCTWYLVAF). Topologically, residues 704-729 (PPEVVTDWHMLPTEALVHCRTRSWVS) are extracellular. The chain crosses the membrane as a helical span at residues 730 to 750 (FGLAHATNATLAFLCFLGTFL). At 751–762 (VRSQPGRYNRAR) the chain is on the cytoplasmic side. A helical membrane pass occupies residues 763–783 (GLTFAMLAYFITWVSFVPLLA). Residues 784-791 (NVQVVLRP) lie on the Extracellular side of the membrane. A helical transmembrane segment spans residues 792 to 812 (AVQMGALLLCVLGILAAFHLP). The Cytoplasmic portion of the chain corresponds to 813-852 (RCYLLIRQPGLNTPEFFLGGGPGDAQGRNDGDTGNQGKHE). The tract at residues 833–852 (GPGDAQGRNDGDTGNQGKHE) is disordered. Basic and acidic residues predominate over residues 839–852 (GRNDGDTGNQGKHE).

Belongs to the G-protein coupled receptor 3 family. TAS1R subfamily. In terms of assembly, forms homodimers or heterodimers with TAS1R1 and TAS1R2.

It is found in the cell membrane. In terms of biological role, putative taste receptor. TAS1R1/TAS1R3 responds to the umami taste stimulus (the taste of monosodium glutamate). TAS1R2/TAS1R3 recognizes diverse natural and synthetic sweeteners. TAS1R3 is essential for the recognition and response to the disaccharide trehalose. Sequence differences within and between species can significantly influence the selectivity and specificity of taste responses. This Gorilla gorilla gorilla (Western lowland gorilla) protein is Taste receptor type 1 member 3 (TAS1R3).